Reading from the N-terminus, the 232-residue chain is Ubiquinone biosynthesis O-methyltransferase (232 aa).

Positions 36, 55, 76, and 120 each coordinate S-adenosyl-L-methionine.

This sequence belongs to the methyltransferase superfamily. UbiG/COQ3 family.

The catalysed reaction is a 3-demethylubiquinol + S-adenosyl-L-methionine = a ubiquinol + S-adenosyl-L-homocysteine + H(+). It carries out the reaction a 3-(all-trans-polyprenyl)benzene-1,2-diol + S-adenosyl-L-methionine = a 2-methoxy-6-(all-trans-polyprenyl)phenol + S-adenosyl-L-homocysteine + H(+). Its pathway is cofactor biosynthesis; ubiquinone biosynthesis. Its function is as follows. O-methyltransferase that catalyzes the 2 O-methylation steps in the ubiquinone biosynthetic pathway. In Burkholderia thailandensis (strain ATCC 700388 / DSM 13276 / CCUG 48851 / CIP 106301 / E264), this protein is Ubiquinone biosynthesis O-methyltransferase.